We begin with the raw amino-acid sequence, 285 residues long: Bifunctional protein FolD (285 aa).

Residues 165 to 167, Ser190, and Ile231 contribute to the NADP(+) site; that span reads GRS.

It belongs to the tetrahydrofolate dehydrogenase/cyclohydrolase family. Homodimer.

The catalysed reaction is (6R)-5,10-methylene-5,6,7,8-tetrahydrofolate + NADP(+) = (6R)-5,10-methenyltetrahydrofolate + NADPH. It carries out the reaction (6R)-5,10-methenyltetrahydrofolate + H2O = (6R)-10-formyltetrahydrofolate + H(+). It participates in one-carbon metabolism; tetrahydrofolate interconversion. In terms of biological role, catalyzes the oxidation of 5,10-methylenetetrahydrofolate to 5,10-methenyltetrahydrofolate and then the hydrolysis of 5,10-methenyltetrahydrofolate to 10-formyltetrahydrofolate. This is Bifunctional protein FolD from Magnetococcus marinus (strain ATCC BAA-1437 / JCM 17883 / MC-1).